The primary structure comprises 87 residues: U3-theraphotoxin-Hhn1j (87 aa).

Positions 1-24 (MVNMKASMFLTFAGLVLLFVVCYA) are cleaved as a signal peptide. The propeptide occupies 25 to 52 (SESEEKEFPKEMLSSIFAVDNDFKQEER). Cystine bridges form between Cys54-Cys67, Cys61-Cys72, and Cys66-Cys79.

The protein belongs to the neurotoxin 10 (Hwtx-1) family. 51 (Hntx-8) subfamily. Hntx-8 sub-subfamily. As to expression, expressed by the venom gland.

The protein localises to the secreted. Ion channel inhibitor. This chain is U3-theraphotoxin-Hhn1j, found in Cyriopagopus hainanus (Chinese bird spider).